A 760-amino-acid polypeptide reads, in one-letter code: Xaa-Pro dipeptidyl-peptidase (760 aa).

Residues S349, D469, and H499 each act as charge relay system in the active site.

The protein belongs to the peptidase S15 family. Homodimer.

Its subcellular location is the cytoplasm. The enzyme catalyses Hydrolyzes Xaa-Pro-|- bonds to release unblocked, N-terminal dipeptides from substrates including Ala-Pro-|-p-nitroanilide and (sequentially) Tyr-Pro-|-Phe-Pro-|-Gly-Pro-|-Ile.. Removes N-terminal dipeptides sequentially from polypeptides having unsubstituted N-termini provided that the penultimate residue is proline. This is Xaa-Pro dipeptidyl-peptidase from Streptococcus pyogenes serotype M1.